An 875-amino-acid chain; its full sequence is Probable inorganic carbon transporter subunit DabA (875 aa).

C380, D382, H563, and C578 together coordinate Zn(2+).

This sequence belongs to the inorganic carbon transporter (TC 9.A.2) DabA family. As to quaternary structure, forms a complex with DabB. The cofactor is Zn(2+).

The protein localises to the cell membrane. In terms of biological role, part of an energy-coupled inorganic carbon pump. The sequence is that of Probable inorganic carbon transporter subunit DabA from Geobacillus thermodenitrificans (strain NG80-2).